Consider the following 322-residue polypeptide: Ribose-phosphate pyrophosphokinase 1 (322 aa).

Residues Asp-39 to Glu-41 and Arg-98 to Gln-99 each bind ATP. The Mg(2+) site is built by His-132 and Asp-173. Lys-196 is an active-site residue. D-ribose 5-phosphate contacts are provided by residues Arg-198, Asp-224, and Asp-228–Thr-232.

Belongs to the ribose-phosphate pyrophosphokinase family. Class I subfamily. Homohexamer. Mg(2+) serves as cofactor.

It is found in the cytoplasm. It carries out the reaction D-ribose 5-phosphate + ATP = 5-phospho-alpha-D-ribose 1-diphosphate + AMP + H(+). It functions in the pathway metabolic intermediate biosynthesis; 5-phospho-alpha-D-ribose 1-diphosphate biosynthesis; 5-phospho-alpha-D-ribose 1-diphosphate from D-ribose 5-phosphate (route I): step 1/1. Functionally, involved in the biosynthesis of the central metabolite phospho-alpha-D-ribosyl-1-pyrophosphate (PRPP) via the transfer of pyrophosphoryl group from ATP to 1-hydroxyl of ribose-5-phosphate (Rib-5-P). In Streptococcus pneumoniae serotype 4 (strain ATCC BAA-334 / TIGR4), this protein is Ribose-phosphate pyrophosphokinase 1.